We begin with the raw amino-acid sequence, 216 residues long: Probable transaldolase (216 aa).

Catalysis depends on Lys83, which acts as the Schiff-base intermediate with substrate.

The protein belongs to the transaldolase family. Type 3B subfamily.

The protein localises to the cytoplasm. The catalysed reaction is D-sedoheptulose 7-phosphate + D-glyceraldehyde 3-phosphate = D-erythrose 4-phosphate + beta-D-fructose 6-phosphate. It participates in carbohydrate degradation; pentose phosphate pathway; D-glyceraldehyde 3-phosphate and beta-D-fructose 6-phosphate from D-ribose 5-phosphate and D-xylulose 5-phosphate (non-oxidative stage): step 2/3. Transaldolase is important for the balance of metabolites in the pentose-phosphate pathway. This chain is Probable transaldolase, found in Thermosipho africanus (strain TCF52B).